Consider the following 65-residue polypeptide: pH-response transcription factor pacC/RIM101 (65 aa).

The C2H2-type 1 zinc-finger motif lies at 16–40 (LTCQWNSCRTTTVKRDHITSHIRVH). The segment at 46–65 (HKCEFCGKSFKRPQDLKKHV) adopts a C2H2-type 2; degenerate zinc-finger fold.

It belongs to the pacC/RIM101 family.

It localises to the nucleus. Its function is as follows. Transcription factor that mediates regulation of both acid- and alkaline-expressed genes in response to ambient pH. At alkaline ambient pH, activates transcription of alkaline-expressed genes (including pac1 itself) and represses transcription of acid-expressed genes. This is pH-response transcription factor pacC/RIM101 (pac1) from Colletotrichum gloeosporioides (Anthracnose fungus).